Reading from the N-terminus, the 169-residue chain is Probable actin-related protein 2/3 complex subunit 4 (169 aa).

Belongs to the ARPC4 family. Component of the Arp2/3 complex, at least composed of arx-1, arx-2, arx-4 and arx-6.

Its subcellular location is the cytoplasm. The protein localises to the cytoskeleton. Functionally, functions as actin-binding component of the Arp2/3 complex which is involved in regulation of actin polymerization and together with an activating nucleation-promoting factor (NPF) mediates the formation of branched actin networks. Seems to contact the mother actin filament. Plays a role in time-dependent memory loss and the retention of conditioned behavior over time. This chain is Probable actin-related protein 2/3 complex subunit 4, found in Caenorhabditis elegans.